A 47-amino-acid polypeptide reads, in one-letter code: Large ribosomal subunit protein bL33 (47 aa).

It belongs to the bacterial ribosomal protein bL33 family.

The polypeptide is Large ribosomal subunit protein bL33 (Staphylococcus capitis).